Reading from the N-terminus, the 207-residue chain is Protein YABBY 6 (207 aa).

The C4-type zinc-finger motif lies at 16–43 (CNFCNTILAVSVPGNSMLNIVTVRCGHC).

This sequence belongs to the YABBY family. As to expression, expressed in leaf blades, leaf sheaths and flowers.

Its subcellular location is the nucleus. This is Protein YABBY 6 (YAB6) from Oryza sativa subsp. japonica (Rice).